The primary structure comprises 227 residues: 7-cyano-7-deazaguanine synthase (227 aa).

9–19 provides a ligand contact to ATP; it reads LSGGLDSATVL. The Zn(2+) site is built by Cys-189, Cys-199, Cys-202, and Cys-205.

The protein belongs to the QueC family. Zn(2+) is required as a cofactor.

It catalyses the reaction 7-carboxy-7-deazaguanine + NH4(+) + ATP = 7-cyano-7-deazaguanine + ADP + phosphate + H2O + H(+). It participates in purine metabolism; 7-cyano-7-deazaguanine biosynthesis. In terms of biological role, catalyzes the ATP-dependent conversion of 7-carboxy-7-deazaguanine (CDG) to 7-cyano-7-deazaguanine (preQ(0)). In Cupriavidus taiwanensis (strain DSM 17343 / BCRC 17206 / CCUG 44338 / CIP 107171 / LMG 19424 / R1) (Ralstonia taiwanensis (strain LMG 19424)), this protein is 7-cyano-7-deazaguanine synthase.